The primary structure comprises 142 residues: Large ribosomal subunit protein uL11 (142 aa).

This sequence belongs to the universal ribosomal protein uL11 family. Part of the ribosomal stalk of the 50S ribosomal subunit. Interacts with L10 and the large rRNA to form the base of the stalk. L10 forms an elongated spine to which L12 dimers bind in a sequential fashion forming a multimeric L10(L12)X complex. In terms of processing, one or more lysine residues are methylated.

Forms part of the ribosomal stalk which helps the ribosome interact with GTP-bound translation factors. This Aliivibrio fischeri (strain MJ11) (Vibrio fischeri) protein is Large ribosomal subunit protein uL11.